The sequence spans 512 residues: Lysine--tRNA ligase (512 aa).

2 residues coordinate Mg(2+): Glu-421 and Glu-428.

It belongs to the class-II aminoacyl-tRNA synthetase family. In terms of assembly, homodimer. It depends on Mg(2+) as a cofactor.

It localises to the cytoplasm. It catalyses the reaction tRNA(Lys) + L-lysine + ATP = L-lysyl-tRNA(Lys) + AMP + diphosphate. This Aeromonas salmonicida (strain A449) protein is Lysine--tRNA ligase.